The chain runs to 659 residues: MSLRNRTNPNSIYVKGILKFPGYQTNLDLHCYVDTGSSLCMASKYVIPEEYWQTAEKPLNIKIANGKIIQLTKVCSKLPIRLGGERFLIPTLFQQESGIDLLLGNNFCQLYSPFIQYTDRIYFHLNKQSVIIGKITKAYQYGVKGFLESMKKKSKVNRPEPINITSNQHLFLEEGGNHVDEMLYEIQISKFSAIEEMLERVSSENPIDPEKSKQWMTATIELIDPKTVVKVKPMSYSPSDREEFDRQIKELLELKVIKPSKSTHMSPAFLVENEAERRRGKKRMVVNYKAMNKATKGDAHNLPNKDELLTLVRGKKIYSSFDCKSGLWQVLLDKESQLLTAFTCPQGHYQWNVVPFGLKQAPSIFPKTYANSHSNQYSKYCCVYVDDILVFSNTGRKEHYIHVLNILRRCEKLGIILSKKKAQLFKEKINFLGLEIDQGTHCPQNHILEHIHKFPDRIEDKKQLQRFLGILTYASDYIPKLASIRKPLQSKLKEDSTWTWNDTDSQYMAKIKKNLKSFPKLYHPEPNDKLVIETDASEEFWGGILKAIHNSHEYICRYASGSFKAAERNYHSNEKELLAVIRVIKKFSIYLTPSRFLIRTDNKNFTHFVNINLKGDRKQGRLVRWQMWLSQYDFDVEHIAGTKNVFADFLQENTLTNYV.

The segment at 1–180 (MSLRNRTNPN…FLEEGGNHVD (180 aa)) is protease. Aspartate 34 is an active-site residue. The Reverse transcriptase domain maps to 252–436 (LELKVIKPSK…EKINFLGLEI (185 aa)).

This sequence belongs to the caulimoviridae enzymatic polyprotein family.

The catalysed reaction is DNA(n) + a 2'-deoxyribonucleoside 5'-triphosphate = DNA(n+1) + diphosphate. Functionally, encodes for at least two polypeptides: protease (PR) and reverse transcriptase (RT). The protease processes the polyprotein in cis. Reverse transcriptase is multifunctional enzyme that converts the viral RNA genome into dsDNA in viral cytoplasmic capsids. This enzyme displays a DNA polymerase activity that can copy either DNA or RNA templates, and a ribonuclease H (RNase H) activity that cleaves the RNA strand of RNA-DNA heteroduplexes in a partially processive 3'- to 5'-endonucleasic mode. Neo-synthesized pregenomic RNA (pgRNA) are encapsidated, and reverse-transcribed inside the nucleocapsid. Partial (+)DNA is synthesized from the (-)DNA template and generates the relaxed circular DNA (RC-DNA) genome. After budding and infection, the RC-DNA migrates in the nucleus, and is converted into a plasmid-like covalently closed circular DNA (cccDNA). The protein is Enzymatic polyprotein of Dianthus caryophyllus (Carnation).